The following is a 1480-amino-acid chain: UDP-N-acetylglucosamine--peptide N-acetylglucosaminyltransferase (1480 aa).

TPR repeat units follow at residues isoleucine 38–lysine 71, valine 113–asparagine 146, alanine 176–proline 209, and serine 288–phenylalanine 321. Basic and acidic residues predominate over residues proline 468 to leucine 485. Positions proline 468 to serine 497 are disordered. 2 TPR repeats span residues tyrosine 613–phenylalanine 646 and aspartate 648–asparagine 680. The tract at residues leucine 1093 to alanine 1128 is disordered. Polar residues predominate over residues aspartate 1099 to arginine 1112. Residues glutamine 1269, lysine 1272, histidine 1333–arginine 1336, glycine 1351–threonine 1353, and aspartate 1357 each bind UDP.

This sequence belongs to the glycosyltransferase 41 family. O-GlcNAc transferase subfamily.

The protein localises to the cytoplasm. It is found in the nucleus. The catalysed reaction is L-seryl-[protein] + UDP-N-acetyl-alpha-D-glucosamine = 3-O-(N-acetyl-beta-D-glucosaminyl)-L-seryl-[protein] + UDP + H(+). It carries out the reaction L-threonyl-[protein] + UDP-N-acetyl-alpha-D-glucosamine = 3-O-(N-acetyl-beta-D-glucosaminyl)-L-threonyl-[protein] + UDP + H(+). It participates in protein modification; protein glycosylation. In terms of biological role, catalyzes the transfer of a single N-acetylglucosamine from UDP-GlcNAc to a serine or threonine residue in cytoplasmic and nuclear proteins resulting in their modification with a beta-linked N-acetylglucosamine (O-GlcNAc). The protein is UDP-N-acetylglucosamine--peptide N-acetylglucosaminyltransferase of Giardia intestinalis (strain ATCC 50803 / WB clone C6) (Giardia lamblia).